The sequence spans 171 residues: Peptide methionine sulfoxide reductase MsrA (171 aa).

Residue Cys13 is part of the active site.

It belongs to the MsrA Met sulfoxide reductase family.

The catalysed reaction is L-methionyl-[protein] + [thioredoxin]-disulfide + H2O = L-methionyl-(S)-S-oxide-[protein] + [thioredoxin]-dithiol. It catalyses the reaction [thioredoxin]-disulfide + L-methionine + H2O = L-methionine (S)-S-oxide + [thioredoxin]-dithiol. Functionally, has an important function as a repair enzyme for proteins that have been inactivated by oxidation. Catalyzes the reversible oxidation-reduction of methionine sulfoxide in proteins to methionine. The chain is Peptide methionine sulfoxide reductase MsrA from Mycolicibacterium paratuberculosis (strain ATCC BAA-968 / K-10) (Mycobacterium paratuberculosis).